We begin with the raw amino-acid sequence, 247 residues long: TM2 domain-containing protein 3 (247 aa).

The N-terminal stretch at 1-30 (MDLMMALKRVCRVLLFVTQMYVFSGRGSLS) is a signal peptide. Over 31-179 (FEYSQPVAQP…RTFPKMLYCN (149 aa)) the chain is Extracellular. N-linked (GlcNAc...) asparagine glycosylation is found at N87, N99, N139, N155, N169, and N179. Residues 180 to 200 (WTGGYKWSTALALSITLGGFG) traverse the membrane as a helical segment. The TM2 domain maps to 183–231 (GYKWSTALALSITLGGFGADRFYLGQWREGLGKLFSFGGLGIWTLIDVF). Topologically, residues 201 to 215 (ADRFYLGQWREGLGK) are cytoplasmic. The chain crosses the membrane as a helical span at residues 216–236 (LFSFGGLGIWTLIDVFLISVG). Topologically, residues 237–247 (YVGPADGSLYI) are extracellular.

The protein belongs to the TM2 family.

It localises to the membrane. The chain is TM2 domain-containing protein 3 (tm2d3) from Xenopus laevis (African clawed frog).